Reading from the N-terminus, the 375-residue chain is Fructose-1,6-bisphosphate aldolase/phosphatase (375 aa).

Asp15 serves as the catalytic Proton acceptor; for FBP phosphatase activity. Positions 15, 22, 56, and 57 each coordinate Mg(2+). His22 contributes to the beta-D-fructose 1,6-bisphosphate binding site. His22 lines the dihydroxyacetone phosphate pocket. Residue Tyr94 participates in beta-D-fructose 1,6-bisphosphate binding. Gln98 provides a ligand contact to Mg(2+). 107–108 (GN) serves as a coordination point for beta-D-fructose 1,6-bisphosphate. Asp135 is a Mg(2+) binding site. Residue Lys136 participates in beta-D-fructose 1,6-bisphosphate binding. Lys136 is a dihydroxyacetone phosphate binding site. The Proton donor/acceptor; for FBP aldolase activity role is filled by Tyr237. Mg(2+)-binding residues include Lys240, Asp241, and Asp242. The Schiff-base intermediate with DHAP; for FBP aldolase activity role is filled by Lys240. Residues 250 to 251 (QS), Arg274, Asp295, and Tyr357 each bind beta-D-fructose 1,6-bisphosphate. Dihydroxyacetone phosphate is bound by residues Arg274 and Asp295.

Belongs to the FBP aldolase/phosphatase family. In terms of assembly, homooctamer; dimer of tetramers. Requires Mg(2+) as cofactor.

The catalysed reaction is beta-D-fructose 1,6-bisphosphate + H2O = beta-D-fructose 6-phosphate + phosphate. It catalyses the reaction beta-D-fructose 1,6-bisphosphate = D-glyceraldehyde 3-phosphate + dihydroxyacetone phosphate. It participates in carbohydrate biosynthesis; gluconeogenesis. With respect to regulation, activity is enhanced by dithioerythritol, and is slightly inhibited by fructose 2,6-bisphosphate. AMP does not inhibit the enzyme activity. In terms of biological role, catalyzes two subsequent steps in gluconeogenesis: the aldol condensation of dihydroxyacetone phosphate (DHAP) and glyceraldehyde-3-phosphate (GA3P) to fructose-1,6-bisphosphate (FBP), and the dephosphorylation of FBP to fructose-6-phosphate (F6P). Does not display hydrolase activity against fructose 2,6-bisphosphate, fructose 6-phosphate, fructose 1-phosphate, glucose 6-phosphate, and glucose 1-phosphate. Exhibits only negligible activity on inositol-1-phosphate (IMP). Is essential for the growth of T.kodakaraensis under gluconeogenic conditions. The protein is Fructose-1,6-bisphosphate aldolase/phosphatase of Thermococcus kodakarensis (strain ATCC BAA-918 / JCM 12380 / KOD1) (Pyrococcus kodakaraensis (strain KOD1)).